A 1693-amino-acid polypeptide reads, in one-letter code: MSWRDRDFDPHGGRNAFRLTDESKQSSSERAASMRAMRSFTQSIEDEGPPELPASLDIDMIEGVSMKTSDTNDTIIEVKPGKVDPQLGETQKYKMAVPGPGHSEQEQELHKSLIRDEEEDAEVEQVFAASAEPVVTPPKSLNFAETAEELRHAYDQKIRKRPTTPTSACVLDGIAFFAGSVDGSNDTIPTDAEKKIKVSIPSGRRRKTENMSYSEFYESMANQIPGGGGRRMSQSGRTTPLHDYEGDILDENPQYKDKAPPAPVVHRRSSIEWENFADMEDKMEQAEEKARKEEKKEKEETAEVAQNDDVTTEKHQNEVEKSKKMLNFLAKPPTVEITSPDAPHQGAFHDNTPKEPKVVEEEEDDDLPTFSEDMDEARQQVMKEMTESVVKTENVENEKQEDTHISEGHVEYGTEESPAVTDGSYQQDGTENAYDPNAYPGYIWNYETQEWEYDPSYVAPEEPIDQSAYEAQAAAYAEVDQRAAEVVYQREHAGYDQGDFYTHQDTSYSSEAYAHDQAKGYQDPNAYGAEAAADNSQEYDYSAYGGYEGYLAACRAYDEESQQPQYGETVATEAYSQDYGYEQQGDYHHEGVGATDENSTSAISGYEQNGASTSLGYGDAQGYDGYDHNASYYQGQEYQQEYYQNHKYENSQYQVDQHPAESAAPPRPVAPMEPLFKQAPPQPDPFGWDSSGHTGDAPTASEPVQELSPTPEASSSTGTSAPARPPPARPEAPKKDETAVDAAAPPRPPPAARPPPPRPAPANKEKPKEPEPEEDAWAQFKRMTEKVSTAVKSTESTLKNLEETSAANDIKDESYLANVGGSQGFVNESTQKEIQRLTEEKKMEKLQKKKLKQQGKKAATPTLEPDEEDAMDRAAQELAMKMASMRSDMADWKAPEMIPVKEIKKAPEIRRVDSASAIPPRKRSSIKDVQQDSGGSLELPPHLAAPQDSIAPNPKGDHAPDDPILSAPAWADFETSEPMLPPSESGFFSNKDASNEGGVSRDATDDPFVTTVASSEKRSSFVADPFAPQQAALIDESYDPFAVVAVEEVVAMAKAKAEQAAANAENEDDFYNGRQSPTLSTPTPEGGSPISQQRPNAFEDDFKCAELTGLDTPTPLYDEDDSQPLTDFIPKFDGDGWDLMVRHPIKKKSFMAERCWKPCYVRLHGLTLYLYNDKKDAQPIQELLLQATYSLSDTTLQAYDVYGKIHTVKLQFVVYKEKVGIRPGQISRLVDGHITKYGLPLEHSAQCTVLLKFGSLNASHLQTFVTTVEDLLFKCKITRTAKPVYKQDEVQIHCYDEYSAFVDKEGILSDQKARVRLFCLAFLTGSPVLEVGLNDRRRQGKEIVRRKDILPMYTERWIRFEALEFHSIVNKPEFDKEQVIAFSPPDGCFFEIMRFRVRPPRNREKAMTVKSIMKIAGSKVEIRIEAMAAAQIQRTRGSDERRNIPCEDIAIRFPIPEAWIYLFREERHWGVGSIHSKKLRPGKVKNLKDRLLGAVQASEPNLIECAIGEAKYEHVYRSLVWRIPRLPEKHHAAYKSHLLKCRFELSSFDLMPEEFLPRCDVDFTMPLATVSNTVVRSVSVEQHEDSDRVEKFVRYVAKYQYKVEIDYVQCADLDLDMADPSVNPEAAAAPVPELHQPTFNPSTQESDTQQGYRIDFNEAEMGGSNRRDDSSSDEEPDSHKMPIIQIDMKNYGY.

Over residues 1–12 the composition is skewed to basic and acidic residues; sequence MSWRDRDFDPHG. 7 disordered regions span residues 1–54, 222–322, 334–371, 383–438, 585–807, 841–869, and 899–1024; these read MSWR…ELPA, NQIP…VEKS, TVEITSPDAPHQGAFHDNTPKEPKVVEEEEDDDLPTFS, KEMT…DPNA, GDYH…TSAA, KKMEKLQKKKLKQQGKKAATPTLEPDEED, and PVKE…FVAD. The span at 26–39 shows a compositional bias: low complexity; that stretch reads SSSERAASMRAMRS. 2 stretches are compositionally biased toward basic and acidic residues: residues 279-301 and 311-322; these read MEDKMEQAEEKARKEEKKEKEET and TTEKHQNEVEKS. Residues 360–371 are compositionally biased toward acidic residues; the sequence is EEEEDDDLPTFS. A compositionally biased stretch (basic and acidic residues) spans 393-412; that stretch reads ENVENEKQEDTHISEGHVEY. Residues 596–615 are compositionally biased toward polar residues; the sequence is DENSTSAISGYEQNGASTSL. Positions 632 to 643 are enriched in low complexity; that stretch reads YYQGQEYQQEYY. The DPF 1 signature appears at 684–686; sequence DPF. Residues 708 to 722 show a composition bias toward low complexity; that stretch reads SPTPEASSSTGTSAP. The span at 745-760 shows a compositional bias: pro residues; the sequence is PPRPPPAARPPPPRPA. Polar residues predominate over residues 786-807; that stretch reads KVSTAVKSTESTLKNLEETSAA. The segment covering 899–913 has biased composition (basic and acidic residues); the sequence is PVKEIKKAPEIRRVD. 3 short sequence motifs (DPF) span residues 1006 to 1008, 1024 to 1026, and 1039 to 1041; these read DPF. The segment at 1062–1095 is disordered; the sequence is ANAENEDDFYNGRQSPTLSTPTPEGGSPISQQRP. Residues 1073–1095 show a composition bias toward polar residues; that stretch reads GRQSPTLSTPTPEGGSPISQQRP. One can recognise an SHD domain in the interval 1136-1283; sequence GWDLMVRHPI…KCKITRTAKP (148 aa). The MHD domain maps to 1287–1606; the sequence is QDEVQIHCYD…AKYQYKVEID (320 aa). Residues 1633-1693 are disordered; that stretch reads ELHQPTFNPS…IQIDMKNYGY (61 aa). A compositionally biased stretch (polar residues) spans 1637–1651; it reads PTFNPSTQESDTQQG.

This sequence belongs to the Stoned B family.

The protein localises to the cytoplasm. Its function is as follows. Potential adapter protein, which may be involved in endocytic vesicle recycling of synaptic vesicles. The sequence is that of Putative stoned B-like protein (unc-41) from Caenorhabditis elegans.